Reading from the N-terminus, the 179-residue chain is Protein LDB18 (179 aa).

May be involved in protein-linked oligosaccharide phosphorylation since the deletion reduces the negative charge of the cell surface. This Saccharomyces cerevisiae (strain ATCC 204508 / S288c) (Baker's yeast) protein is Protein LDB18 (LDB18).